Here is a 337-residue protein sequence, read N- to C-terminus: F420-dependent glucose-6-phosphate dehydrogenase (337 aa).

Asp-44 lines the coenzyme F420-(gamma-Glu)n pocket. The active-site Proton donor is the His-45. Coenzyme F420-(gamma-Glu)n is bound by residues Thr-81 and 112 to 113 (TG). The active-site Proton acceptor is the Glu-114. Coenzyme F420-(gamma-Glu)n is bound by residues Asn-117, 180–181 (GG), and 183–184 (GV). Residues Thr-198, Lys-201, Lys-262, and Arg-286 each coordinate substrate.

This sequence belongs to the F420-dependent glucose-6-phosphate dehydrogenase family. In terms of assembly, homodimer.

The catalysed reaction is oxidized coenzyme F420-(gamma-L-Glu)(n) + D-glucose 6-phosphate + H(+) = 6-phospho-D-glucono-1,5-lactone + reduced coenzyme F420-(gamma-L-Glu)(n). In terms of biological role, catalyzes the coenzyme F420-dependent oxidation of glucose 6-phosphate (G6P) to 6-phosphogluconolactone. The sequence is that of F420-dependent glucose-6-phosphate dehydrogenase from Kineococcus radiotolerans (strain ATCC BAA-149 / DSM 14245 / SRS30216).